We begin with the raw amino-acid sequence, 558 residues long: Aspartate--tRNA ligase 2, cytoplasmic (558 aa).

A compositionally biased stretch (low complexity) spans 1-18 (MSSESEIPPLSSSTAAAE). A disordered region spans residues 1–57 (MSSESEIPPLSSSTAAAEESGEKTSKKAAKKEAAKLEKLRRRQEQEEATRRTASISL). Ser2 carries the post-translational modification N-acetylserine. Residues 20-50 (SGEKTSKKAAKKEAAKLEKLRRRQEQEEATR) show a composition bias toward basic and acidic residues. A DNA-binding region (OB) is located at residues 110 to 195 (VLIRGRVHTN…QVEIQVRKVY (86 aa)). Glu286 contributes to the L-aspartate binding site. Residues 308 to 311 (QLHK) form an aspartate region. Arg330 lines the L-aspartate pocket. ATP-binding positions include 330-332 (RAE), 338-340 (RHL), and Glu481. Mg(2+) contacts are provided by Glu481 and Ser484. 2 residues coordinate L-aspartate: Ser484 and Arg488. Residue 529–532 (GLER) coordinates ATP.

The protein belongs to the class-II aminoacyl-tRNA synthetase family. Type 2 subfamily.

The protein localises to the cytoplasm. Its subcellular location is the cytosol. It localises to the endoplasmic reticulum. It catalyses the reaction tRNA(Asp) + L-aspartate + ATP = L-aspartyl-tRNA(Asp) + AMP + diphosphate. Catalyzes the specific attachment of an amino acid to its cognate tRNA in a 2 step reaction: the amino acid (AA) is first activated by ATP to form AA-AMP and then transferred to the acceptor end of the tRNA. Involved in the perception of beta-aminobutyric acid (BABA) and required for BABA priming effect in disease resistance. The chain is Aspartate--tRNA ligase 2, cytoplasmic from Arabidopsis thaliana (Mouse-ear cress).